Consider the following 520-residue polypeptide: GMP synthase [glutamine-hydrolyzing] (520 aa).

One can recognise a Glutamine amidotransferase type-1 domain in the interval 8–202 (RLLIIDFGSQ…FVRLAGFSGD (195 aa)). Cysteine 86 functions as the Nucleophile in the catalytic mechanism. Active-site residues include histidine 177 and glutamate 179. The 193-residue stretch at 203–395 (WTMGAYREQM…LGLPDSFIGR (193 aa)) folds into the GMPS ATP-PPase domain. Residue 230 to 236 (SGGVDSS) coordinates ATP.

Homodimer.

It carries out the reaction XMP + L-glutamine + ATP + H2O = GMP + L-glutamate + AMP + diphosphate + 2 H(+). Its pathway is purine metabolism; GMP biosynthesis; GMP from XMP (L-Gln route): step 1/1. Its function is as follows. Catalyzes the synthesis of GMP from XMP. In Ruegeria sp. (strain TM1040) (Silicibacter sp.), this protein is GMP synthase [glutamine-hydrolyzing].